The chain runs to 314 residues: uncharacterized protein (314 aa).

Positions 192 to 289 constitute an HTH araC/xylS-type domain; the sequence is TEVKLHIKDN…GSSPGLFRSL (98 aa). 2 consecutive DNA-binding regions (H-T-H motif) follow at residues 209 to 230 and 257 to 279; these read TDVASHFHISGRHLSRLFAAEL and IKEIAEEIGFSVHYFTRVFSAKI.

This is an uncharacterized protein from Bacillus subtilis (strain 168).